Consider the following 103-residue polypeptide: DNA-directed RNA polymerase subunit omega (103 aa).

Belongs to the RNA polymerase subunit omega family. As to quaternary structure, the RNAP catalytic core consists of 2 alpha, 1 beta, 1 beta' and 1 omega subunit. When a sigma factor is associated with the core the holoenzyme is formed, which can initiate transcription.

The catalysed reaction is RNA(n) + a ribonucleoside 5'-triphosphate = RNA(n+1) + diphosphate. Functionally, promotes RNA polymerase assembly. Latches the N- and C-terminal regions of the beta' subunit thereby facilitating its interaction with the beta and alpha subunits. This is DNA-directed RNA polymerase subunit omega from Streptococcus agalactiae serotype III (strain NEM316).